Reading from the N-terminus, the 524-residue chain is Lysine--tRNA ligase (524 aa).

2 residues coordinate Mg(2+): Glu433 and Glu440.

The protein belongs to the class-II aminoacyl-tRNA synthetase family. Homodimer. Mg(2+) is required as a cofactor.

The protein resides in the cytoplasm. The catalysed reaction is tRNA(Lys) + L-lysine + ATP = L-lysyl-tRNA(Lys) + AMP + diphosphate. This Colwellia psychrerythraea (strain 34H / ATCC BAA-681) (Vibrio psychroerythus) protein is Lysine--tRNA ligase.